We begin with the raw amino-acid sequence, 100 residues long: MIPLSWYMALATVLFCIGVAGFLTRRNIIVMLLSLELMLNGVNLNLVAMSYFMDSLRGHVFTLFVITVAACEAAVGLGIVICLFRSRRTVRNDNIVELRG.

A run of 3 helical transmembrane segments spans residues 2 to 22 (IPLS…VAGF), 28 to 48 (IIVM…NLVA), and 64 to 84 (FVIT…ICLF).

It belongs to the complex I subunit 4L family. NDH-1 is composed of 14 different subunits. Subunits NuoA, H, J, K, L, M, N constitute the membrane sector of the complex.

It localises to the cell inner membrane. It catalyses the reaction a quinone + NADH + 5 H(+)(in) = a quinol + NAD(+) + 4 H(+)(out). Functionally, NDH-1 shuttles electrons from NADH, via FMN and iron-sulfur (Fe-S) centers, to quinones in the respiratory chain. The immediate electron acceptor for the enzyme in this species is believed to be ubiquinone. Couples the redox reaction to proton translocation (for every two electrons transferred, four hydrogen ions are translocated across the cytoplasmic membrane), and thus conserves the redox energy in a proton gradient. In Desulfovibrio desulfuricans (strain ATCC 27774 / DSM 6949 / MB), this protein is NADH-quinone oxidoreductase subunit K.